A 358-amino-acid polypeptide reads, in one-letter code: Phospho-N-acetylmuramoyl-pentapeptide-transferase (358 aa).

10 helical membrane-spanning segments follow: residues 27–47 (LFNN…SLFA), 81–101 (MGGV…TINL), 106–126 (LFLL…DDYL), 147–167 (VISI…PLVI), 171–191 (SWVI…LVGI), 201–221 (LDGL…TEIL), 228–248 (LFVF…FLKY), 255–275 (IFMG…IALL), 278–298 (SVFT…SVII), and 336–356 (IVEN…VLKI).

Belongs to the glycosyltransferase 4 family. MraY subfamily. Mg(2+) is required as a cofactor.

It is found in the cell inner membrane. The enzyme catalyses UDP-N-acetyl-alpha-D-muramoyl-L-alanyl-gamma-D-glutamyl-meso-2,6-diaminopimeloyl-D-alanyl-D-alanine + di-trans,octa-cis-undecaprenyl phosphate = di-trans,octa-cis-undecaprenyl diphospho-N-acetyl-alpha-D-muramoyl-L-alanyl-D-glutamyl-meso-2,6-diaminopimeloyl-D-alanyl-D-alanine + UMP. Its pathway is cell wall biogenesis; peptidoglycan biosynthesis. Catalyzes the initial step of the lipid cycle reactions in the biosynthesis of the cell wall peptidoglycan: transfers peptidoglycan precursor phospho-MurNAc-pentapeptide from UDP-MurNAc-pentapeptide onto the lipid carrier undecaprenyl phosphate, yielding undecaprenyl-pyrophosphoryl-MurNAc-pentapeptide, known as lipid I. The chain is Phospho-N-acetylmuramoyl-pentapeptide-transferase from Prochlorococcus marinus (strain MIT 9215).